The following is a 2451-amino-acid chain: MGSITHEPKYTNEPIAIVGSSCRFPGDATSPSKLWDLLKNPRDVVSEIPSTRFNTTGFYHPDSQNHGAHPRAFDRDFFGISPKEAQSMDPQQRMLLETVYEGIESAGYSMQQLRGSNTAVFVGVMFLDYQLISARGLDSLPQYHATGVAMSILANRLSYFYDWKGPSVGIDTACSSSLVALHYAVQTLRSGEAKMAVAAGSNLILVPDLFVSESSLNMLSPNGRSYMWDKDADGYTRGEGTSAVILKTLSQAISDGDHIECIIRETGVNQDGQTPGITMPSPTAQAELIRSTYAKAGLDLRLECDRPQYFEAHGTGTQAGDPREAEAISTVFFPKGSIYDRKLTVGSVKTLIGHLEGSAGLAGVLKTSQALQHGLIPANLHFKTLNPKIEPFYTNLQVPTETQPWPALPNSWTRRASVNSFGFGGTNAHAILEAWNSKGHESDSHSKSVGGLFVLSANSAQSLASRASQLCHYLESNPETDLRRLSYTLFQRANFSFRAAFSATSVQQLTEKLKTAVLNKTSRTASIPENMPPRILGVFTGQGAQWATMGAKLYESSIVFRSAFSRMQDSLDELSVKDGRPSWSLIEELRAPPATSHIGEAAVSQPICTAVQVALVDMLSAAGVQFSGVVGHSSGEIAAAYTAGYLNAHDAIRIAYFRGLHSKKAQGPDGCSGKMMAVGMSIDQAAGFCAESRGTIKIAASNSARSCTLAGDASAIDSAKEKLDAAGTFARVLQVDTAYHSHHMQPVAQPYLDSLQKCSIKINTKPGTNVVWYSSVWGSNGRSRSFSGKDAESLKGQYWVDNMTNTVLFSQAVQRAVNESHVFDFALEVGPHPALKGPATETINNMTGIGLPYSGVLKRGQHDVESFFDALGLLWKTFPLQSGRSIVSFDGIERAFAPGGKNNRLGLLKDLPSYPFDHDSVYWKESRHSAIVRTQNQKRHQLLGSASTFGSGKQREVHWKQVLRLEEIPWLFGHTIQGEYLFPATCYVTMAYEAAIRLVSPAQEIRLVELHDIDVFRALSLKADSPGTEILFAVRITSQLDGVITASWSCYSNPVDFEHGQNLGDMPAQAESHVEGFLRIELGAPRDDILPARSEPILPLIPLDVEELYDTLAVLGHGYKEHFQTPKMLRRLHHAVVSMPAGWHEANSLTRSDVNPAALDTGIHGLLAGYSCPGDRRQRSAYLPSRIDSIRISMVAVPAVDGDGPTELLADSFVTHGDASRISGDINVFNPENNKTHVQIRGVHLLNLPGSLRSSRETYHQDIWERDALCGIEPDRKSIISNNRAQISNLAMRLVLFYCQKVLKELKPFEIMLMGKARKNFLTWVQKVLIPSVRAGEHEANKEWLDDSEAELNQEVERLKLANSADVVLLERLGRNLTSITRGLTAGVKVAEQENALQRFYADSFGFRETTADAAALVSQICHRYPAMKMIEVGAGFGSGLRDALINAAGKRRYTSYTVTNTVEPSDDDSKLIFKLLDIDKDPVQQGFVEASYDLVIATTSYSTKVSQETVINARKLLRPGGFLLLVALTNDYLPVRFVQSLLPRTWLEKDDSRPQIITVSDCDALLKVNGFSGVDVTYTQHFCSVMLSQAVDDVVLAVRDPITVTQKIDAEILLVLDPSPSTIVENLASQLEDRLASFATVRKVSGLENINVAPEAIILNLCDLDTPVFQEMSELRFKGLQEIMRQASVLLWITEGARGGAKPANTMVLGWGRSARLERSTMKLQILDIEQESQTVDPDVICKLLLNLSSSSSDDQDILFTLEPELMLRGNAIYIPRIWPVDGLNELADTRYKDVYVETSATNPFAALDERGILAIERPYGHTPASDLEVLASSVHGFRFQGEENIRQLCISRNVAGESSLTLSDEDSLEILWQYENGNGGIGYPHQLQFLITSAIAEATLRSLSGHVWIHGAPSWLQKGLDLAASRRDDIQLFNTTSDREIVTGNTNFLHPFATERDLVLVKPKDIAAFVCLEDSQQDHNLVGLVRSIWPSIRIELPVLSLNSFDGVVFNGLSKPMFVDLVKWHLSSGTLVSENLAEGAVIPVEHISKKSPSSILPTSVLDRTTTTTITAKLLPPDHDGIFSSKKTYLLLGLAGDFGISIALWMFDSGARHVVLASRNPVVLQPVVDHVAATHGATLRFMAIDICDEGSLSAAWAEIHTSMPPVGGIMNGAMLMRDQLFADQPWSDFSAVMGPKVRGTQNLVALLDREVAPEQLDFVVFFSSAVAVAGNGGQTAYGSSNWFMQGTASNMRQRGYPGCVVHIGGVSGLGYVQRHEKRKMLEDSLYWLMSPVSETDLHDMLAEVIAGDRHDLITGIRGDIRTYTWREQPRLWHYLQSEDDSNDETAKEGSSASLKIQLASSVADPDACLDLLLGGFTSALCGMLHMKPEELDTNVPVASIGIDSLVAVRVREWFMQQVGVEVSVLKVMSLNTPLLALCKDVLAIWRKQVKA.

The Ketosynthase family 3 (KS3) domain occupies 12–434 (NEPIAIVGSS…GTNAHAILEA (423 aa)). Residues C174, H313, and H354 each act as for beta-ketoacyl synthase activity in the active site. One can recognise a Malonyl-CoA:ACP transacylase (MAT) domain in the interval 538-846 (VFTGQGAQWA…GPATETINNM (309 aa)). The segment at 940–1085 (HQLLGSASTF…GFLRIELGAP (146 aa)) is N-terminal hotdog fold. Residues 940–1254 (HQLLGSASTF…LLNLPGSLRS (315 aa)) form the PKS/mFAS DH domain. H974 functions as the Proton acceptor; for dehydratase activity in the catalytic mechanism. Positions 1100–1254 (LIPLDVEELY…LLNLPGSLRS (155 aa)) are C-terminal hotdog fold. D1160 functions as the Proton donor; for dehydratase activity in the catalytic mechanism. A methyltransfrase (MT) domain region spans residues 1294-1590 (LVLFYCQKVL…QHFCSVMLSQ (297 aa)). Residues 2088-2266 (TYLLLGLAGD…PGCVVHIGGV (179 aa)) enclose the Ketoreductase (KR) domain. Residues 2366–2451 (DACLDLLLGG…LAIWRKQVKA (86 aa)) enclose the Carrier domain. At S2404 the chain carries O-(pantetheine 4'-phosphoryl)serine.

It depends on pantetheine 4'-phosphate as a cofactor.

It participates in secondary metabolite biosynthesis. Reducing polyketide synthase; part of the gene cluster that mediates the biosynthesis of fusamarins, isocoumarin derivatives that show moderate cytotoxicity with IC(50) values between 1 and 50 uM. The polyketide synthase FMN1 probably synthesizes two different polyketides, a tetra- and a pentaketide, containinga varying number of double bonds depending on the selective actions of the trans-enoyl reductase FMN2. Chain fusion will presumably be mediated by the KS domain before finally offloading is catalyzed by the alpha/beta hydrolase fold enzyme FMN3. The chain is Reducing polyketide synthase 8 from Fusarium mangiferae (Mango malformation disease fungus).